A 371-amino-acid chain; its full sequence is tRNA 2-selenouridine synthase (371 aa).

The 124-residue stretch at 14-137 (FLDDVPLIDL…MRRFLIDTLD (124 aa)) folds into the Rhodanese domain. The S-selanylcysteine intermediate role is filled by Cys97.

Belongs to the SelU family. In terms of assembly, monomer.

It carries out the reaction 5-methylaminomethyl-2-thiouridine(34) in tRNA + selenophosphate + (2E)-geranyl diphosphate + H2O + H(+) = 5-methylaminomethyl-2-selenouridine(34) in tRNA + (2E)-thiogeraniol + phosphate + diphosphate. It catalyses the reaction 5-methylaminomethyl-2-thiouridine(34) in tRNA + (2E)-geranyl diphosphate = 5-methylaminomethyl-S-(2E)-geranyl-thiouridine(34) in tRNA + diphosphate. The enzyme catalyses 5-methylaminomethyl-S-(2E)-geranyl-thiouridine(34) in tRNA + selenophosphate + H(+) = 5-methylaminomethyl-2-(Se-phospho)selenouridine(34) in tRNA + (2E)-thiogeraniol. The catalysed reaction is 5-methylaminomethyl-2-(Se-phospho)selenouridine(34) in tRNA + H2O = 5-methylaminomethyl-2-selenouridine(34) in tRNA + phosphate. Involved in the post-transcriptional modification of the uridine at the wobble position (U34) of tRNA(Lys), tRNA(Glu) and tRNA(Gln). Catalyzes the conversion of 2-thiouridine (S2U-RNA) to 2-selenouridine (Se2U-RNA). Acts in a two-step process involving geranylation of 2-thiouridine (S2U) to S-geranyl-2-thiouridine (geS2U) and subsequent selenation of the latter derivative to 2-selenouridine (Se2U) in the tRNA chain. The sequence is that of tRNA 2-selenouridine synthase from Aeromonas salmonicida (strain A449).